The chain runs to 396 residues: Acetate kinase (396 aa).

Mg(2+) is bound at residue Asn8. Lys15 is an ATP binding site. Arg89 provides a ligand contact to substrate. Asp146 acts as the Proton donor/acceptor in catalysis. ATP contacts are provided by residues 206–210, 283–285, and 331–335; these read HIGNG, DMR, and GVGEN. Glu383 serves as a coordination point for Mg(2+).

The protein belongs to the acetokinase family. In terms of assembly, homodimer. Requires Mg(2+) as cofactor. Mn(2+) is required as a cofactor.

The protein localises to the cytoplasm. The enzyme catalyses acetate + ATP = acetyl phosphate + ADP. The protein operates within metabolic intermediate biosynthesis; acetyl-CoA biosynthesis; acetyl-CoA from acetate: step 1/2. In terms of biological role, catalyzes the formation of acetyl phosphate from acetate and ATP. Can also catalyze the reverse reaction. The polypeptide is Acetate kinase (Streptococcus pneumoniae (strain 70585)).